We begin with the raw amino-acid sequence, 142 residues long: Protein NIM1-INTERACTING 1 (142 aa).

The tract at residues 47-53 is involved in NPR1/NIM1 interaction; sequence DTFFKLI. A Nuclear localization signal motif is present at residues 60-64; that stretch reads RKRRR. Disordered regions lie at residues 63–86 and 108–142; these read RREE…RSGI and MFVS…NLAL. A coiled-coil region spans residues 110–141; sequence VSDHKEENTKVEQEEDQTEERNEDKALDLNLA. Residues 111–121 show a composition bias toward basic and acidic residues; that stretch reads SDHKEENTKVE.

Belongs to the NPR1-interactor family. In terms of assembly, interacts with NPR1 C-terminal region.

It is found in the nucleus. The chain is Protein NIM1-INTERACTING 1 from Arabidopsis thaliana (Mouse-ear cress).